The sequence spans 39 residues: RapF inhibitor (39 aa).

A propeptide spanning residues 1-34 is cleaved from the precursor; it reads MKLKSKLLLSCLALSTVFVATTIANAPTHQIEVA.

The protein belongs to the Phr family. Interacts with RapF and inhibits its interaction with ComA. Contains a predicted signal peptide cleavage site in the N-terminal region, however the propeptide is probably subject to only one processing event, at the N-terminal end of the mature peptide.

Its subcellular location is the secreted. It localises to the cytoplasm. Functionally, signaling molecule involved in the regulation of genetic competence development. Secreted during production, but the mature peptide acts intracellularly, indicating that it needs to be imported into the cell to function. Stimulates expression of the genes controlled by ComA, a transcriptional factor that regulates the development of genetic competence. Acts by inhibiting RapF, which regulates the activity of ComA. This is RapF inhibitor (phrF) from Bacillus subtilis (strain 168).